Consider the following 596-residue polypeptide: Aspartate--tRNA(Asp/Asn) ligase (596 aa).

Residue E175 participates in L-aspartate binding. The tract at residues 199 to 202 (QQYK) is aspartate. L-aspartate contacts are provided by R221 and H454. Position 221–223 (221–223 (RDE)) interacts with ATP. E488 is a binding site for ATP. R495 contacts L-aspartate. ATP is bound at residue 540 to 543 (GIDR).

This sequence belongs to the class-II aminoacyl-tRNA synthetase family. Type 1 subfamily. Homodimer.

It localises to the cytoplasm. The enzyme catalyses tRNA(Asx) + L-aspartate + ATP = L-aspartyl-tRNA(Asx) + AMP + diphosphate. Its function is as follows. Aspartyl-tRNA synthetase with relaxed tRNA specificity since it is able to aspartylate not only its cognate tRNA(Asp) but also tRNA(Asn). Reaction proceeds in two steps: L-aspartate is first activated by ATP to form Asp-AMP and then transferred to the acceptor end of tRNA(Asp/Asn). The sequence is that of Aspartate--tRNA(Asp/Asn) ligase from Rhizobium rhizogenes (strain K84 / ATCC BAA-868) (Agrobacterium radiobacter).